Reading from the N-terminus, the 479-residue chain is Glutamate--tRNA ligase (479 aa).

Residues 21-31 carry the 'HIGH' region motif; it reads PSPTGYLHVGG. Residues 248–252 carry the 'KMSKS' region motif; the sequence is KLSKR. An ATP-binding site is contributed by K251.

Belongs to the class-I aminoacyl-tRNA synthetase family. Glutamate--tRNA ligase type 1 subfamily. In terms of assembly, monomer.

The protein localises to the cytoplasm. The enzyme catalyses tRNA(Glu) + L-glutamate + ATP = L-glutamyl-tRNA(Glu) + AMP + diphosphate. In terms of biological role, catalyzes the attachment of glutamate to tRNA(Glu) in a two-step reaction: glutamate is first activated by ATP to form Glu-AMP and then transferred to the acceptor end of tRNA(Glu). This is Glutamate--tRNA ligase from Actinobacillus pleuropneumoniae serotype 5b (strain L20).